A 124-amino-acid chain; its full sequence is Small ribosomal subunit protein uS12 (124 aa).

Aspartate 89 is modified (3-methylthioaspartic acid).

This sequence belongs to the universal ribosomal protein uS12 family. As to quaternary structure, part of the 30S ribosomal subunit. Contacts proteins S8 and S17. May interact with IF1 in the 30S initiation complex.

Functionally, with S4 and S5 plays an important role in translational accuracy. Its function is as follows. Interacts with and stabilizes bases of the 16S rRNA that are involved in tRNA selection in the A site and with the mRNA backbone. Located at the interface of the 30S and 50S subunits, it traverses the body of the 30S subunit contacting proteins on the other side and probably holding the rRNA structure together. The combined cluster of proteins S8, S12 and S17 appears to hold together the shoulder and platform of the 30S subunit. This Vibrio campbellii (strain ATCC BAA-1116) protein is Small ribosomal subunit protein uS12.